Consider the following 86-residue polypeptide: Large ribosomal subunit protein bL27 (86 aa).

Residues 1-24 (MAHKKGTGSTRNGRDSNSKRLGVK) are disordered.

The protein belongs to the bacterial ribosomal protein bL27 family.

This chain is Large ribosomal subunit protein bL27, found in Prochlorococcus marinus (strain MIT 9301).